The primary structure comprises 198 residues: MGDYLSHLEEYVKNLYGRLGITSPHHIDMLKIAKDLDIWVHFEDMGSMMVKYDGMYSIVLNQKKSREEQWEDFGHELCHVLKHAGNHFQMNKLFRELQEFQANQFMYHFCVPTFMLLQMELPQWRSQALATIAAVFRVTKEFADKRLDMFERRKAGIQFQKRLAYLLSHKRPNAYEEGDQQHLQVAEEKALYHIGKNI.

To B.subtilis YqaB.

In Bacillus subtilis (strain 168), this protein is Phage-like element PBSX protein XkdA (xkdA).